A 396-amino-acid chain; its full sequence is Protein nipi-4 (396 aa).

Over 1-20 the chain is Extracellular; it reads MELDHTPPPSVLNDNCSASY. Residue Asn15 is glycosylated (N-linked (GlcNAc...) asparagine). Residues 21–41 form a helical membrane-spanning segment; it reads MTPYATVIAMSGLYLLAIFYF. Over 42–396 the chain is Cytoplasmic; the sequence is CKKSKKMCQP…EHHCQSVIHY (355 aa). The 288-residue stretch at 81–368 folds into the Protein kinase domain; the sequence is EVDDFQIGQT…SRLSELHHIV (288 aa). ATP-binding positions include 87 to 95 and Lys111; that span reads IGQTADGFI.

This sequence belongs to the protein kinase superfamily. Tyr protein kinase family. In terms of tissue distribution, expressed in the epidermis of larvae and adults and in vulval and rectal cells.

The protein localises to the membrane. Pseudokinase which plays a role in resistance to fungal infection by promoting expression of antimicrobial peptides (nlp-29, nlp-31, nlp-34, cnc-1, cnc-2 and cnc-4) in the epidermis. In addition, up-regulates nlp-29 expression upon physical wounding and in response to phorbol ester PMA treatment. The polypeptide is Protein nipi-4 (Caenorhabditis elegans).